Here is a 391-residue protein sequence, read N- to C-terminus: Anhydro-N-acetylmuramic acid kinase (391 aa).

ATP is bound at residue 9-16; sequence GTSYDAVE.

The protein belongs to the anhydro-N-acetylmuramic acid kinase family.

It catalyses the reaction 1,6-anhydro-N-acetyl-beta-muramate + ATP + H2O = N-acetyl-D-muramate 6-phosphate + ADP + H(+). Its pathway is amino-sugar metabolism; 1,6-anhydro-N-acetylmuramate degradation. It participates in cell wall biogenesis; peptidoglycan recycling. Its function is as follows. Catalyzes the specific phosphorylation of 1,6-anhydro-N-acetylmuramic acid (anhMurNAc) with the simultaneous cleavage of the 1,6-anhydro ring, generating MurNAc-6-P. Is required for the utilization of anhMurNAc either imported from the medium or derived from its own cell wall murein, and thus plays a role in cell wall recycling. The sequence is that of Anhydro-N-acetylmuramic acid kinase from Streptomyces coelicolor (strain ATCC BAA-471 / A3(2) / M145).